Consider the following 186-residue polypeptide: UPF0200 protein Mbar_A0975 (186 aa).

Residue 8–15 coordinates ATP; that stretch reads GMPASGKS.

The protein belongs to the UPF0200 family.

The protein is UPF0200 protein Mbar_A0975 of Methanosarcina barkeri (strain Fusaro / DSM 804).